The primary structure comprises 1301 residues: Zinc finger protein 532 (1301 aa).

3 disordered regions span residues 26-206 (PKAA…RETE), 223-266 (AEDK…SSSK), and 281-366 (KAAS…IKTI). Positions 32 to 52 (SGHDDHESHMKQNAHGEDDSH) are enriched in basic and acidic residues. Over residues 84-101 (PTGNGLHNGFLTASSLDS) the composition is skewed to polar residues. Positions 102 to 111 (YSKDGAKSLK) are enriched in basic and acidic residues. A compositionally biased stretch (polar residues) spans 122–133 (KDSTFSQFSPIS). A phosphoserine mark is found at Ser-130, Ser-133, and Ser-134. Acidic residues predominate over residues 136–151 (EEFDDDEKIEVDDPPD). Residues 158–170 (SFRSNVLTGSAPQ) show a composition bias toward polar residues. Lys-175 is modified (N6-acetyllysine). A compositionally biased stretch (polar residues) spans 182–195 (ENSSKTGLSTSGNV). Composition is skewed to basic and acidic residues over residues 196–206 (EKNKAVKRETE) and 223–250 (AEDK…EKND). At Thr-205 the chain carries Phosphothreonine. Ser-252, Ser-307, and Ser-314 each carry phosphoserine. A compositionally biased stretch (basic and acidic residues) spans 303–315 (EVNDSPRAADKSP). Residues 337–359 (SISSENSSKGSPSSPAGSTPAIP) show a composition bias toward low complexity. Ser-434 carries the phosphoserine modification. Glycyl lysine isopeptide (Lys-Gly) (interchain with G-Cter in SUMO2) cross-links involve residues Lys-459 and Lys-516. Residues 616–635 (YKCLECGDSFALEKSLTQHY) form a C2H2-type 1; degenerate zinc finger. Residues 754 to 779 (LKCLECNEVFQDETSLATHFQQAADT) form a C2H2-type 2; degenerate zinc finger. C2H2-type zinc fingers lie at residues 783–805 (KTCT…QRIH), 842–865 (FRCV…QGSH), 870–893 (YKCP…YTQH), 905–927 (YKCS…FDQH), and 936–959 (FKCP…KSMH). Lys-980 participates in a covalent cross-link: Glycyl lysine isopeptide (Lys-Gly) (interchain with G-Cter in SUMO2). Residues 983 to 1017 (TQNSANQNKEDTKSMNGKEKLEKKSPSPVKKSMET) form a disordered region. Positions 990-1017 (NKEDTKSMNGKEKLEKKSPSPVKKSMET) are enriched in basic and acidic residues. C2H2-type zinc fingers lie at residues 1025 to 1048 (WTCW…RKEH) and 1055 to 1078 (HPCR…RIKH). The C2H2-type 10; degenerate zinc finger occupies 1085–1111 (YACSHCPDSRRTFTKRLMLEKHVQLMH). A Phosphoserine modification is found at Ser-1140. Residues Lys-1144 and Lys-1167 each participate in a glycyl lysine isopeptide (Lys-Gly) (interchain with G-Cter in SUMO2) cross-link. The C2H2-type 11 zinc finger occupies 1203 to 1226 (YQCRECGLCYTSHVSLSRHLFIVH). The tract at residues 1230-1263 (EPQPVSKQNGAGEDNQQENKPSHEDESPDGAVSD) is disordered. A C2H2-type 12 zinc finger spans residues 1264-1286 (RKCKVCAKTFETEAALNTHMRTH).

This sequence belongs to the krueppel C2H2-type zinc-finger protein family.

The protein localises to the nucleus. May be involved in transcriptional regulation. The chain is Zinc finger protein 532 (ZNF532) from Homo sapiens (Human).